The following is a 125-amino-acid chain: UPF0102 protein PSPA7_4996 (125 aa).

The protein belongs to the UPF0102 family.

The protein is UPF0102 protein PSPA7_4996 of Pseudomonas paraeruginosa (strain DSM 24068 / PA7) (Pseudomonas aeruginosa (strain PA7)).